The sequence spans 498 residues: Hyaluronan-mediated motility receptor (498 aa).

Residues 150 to 331 are required for interaction with FAM83D; the sequence is EEMTSERNVF…ITDLQNQLRQ (182 aa). N-linked (GlcNAc...) asparagine glycans are attached at residues N262 and N302. Hyaluronic acid-binding stretches follow at residues 420 to 430 and 442 to 451; these read KQKIKHVVKLK and KLRSQLAKRK. N-linked (GlcNAc...) asparagine glycosylation occurs at N483. At T488 the chain carries Phosphothreonine.

As to quaternary structure, interacts with ANKRD26. Interacts with DYNLL1. Interacts with FAM83D/CHICA.

It is found in the cell surface. It localises to the cytoplasm. Its subcellular location is the cytoskeleton. The protein resides in the spindle. Receptor for hyaluronic acid (HA). Involved in cell motility. When hyaluronan binds to HMMR, the phosphorylation of a number of proteins, including the PTK2/FAK1 occurs. May also be involved in cellular transformation and metastasis formation, and in regulating extracellular-regulated kinase (ERK) activity. May act as a regulator of adipogenisis. The chain is Hyaluronan-mediated motility receptor (Hmmr) from Rattus norvegicus (Rat).